The chain runs to 765 residues: DNA ligase (765 aa).

Residues 1–34 (MAGDDEDRAVPAAEGAPPPSALPPVSGLDVKAAE) form a disordered region. NAD(+) is bound by residues 61 to 65 (DAEYD), 110 to 111 (SL), and Glu144. Catalysis depends on Lys146, which acts as the N6-AMP-lysine intermediate. Positions 167, 204, 317, and 341 each coordinate NAD(+). Cys446, Cys449, Cys464, and Cys470 together coordinate Zn(2+). Residues 687 to 765 (ATDSAIAGKT…EDEWLAIAQG (79 aa)) form the BRCT domain.

It belongs to the NAD-dependent DNA ligase family. LigA subfamily. It depends on Mg(2+) as a cofactor. Mn(2+) serves as cofactor.

The catalysed reaction is NAD(+) + (deoxyribonucleotide)n-3'-hydroxyl + 5'-phospho-(deoxyribonucleotide)m = (deoxyribonucleotide)n+m + AMP + beta-nicotinamide D-nucleotide.. Its function is as follows. DNA ligase that catalyzes the formation of phosphodiester linkages between 5'-phosphoryl and 3'-hydroxyl groups in double-stranded DNA using NAD as a coenzyme and as the energy source for the reaction. It is essential for DNA replication and repair of damaged DNA. The sequence is that of DNA ligase from Paracoccus denitrificans (strain Pd 1222).